Consider the following 191-residue polypeptide: Leucyl/phenylalanyl-tRNA--protein transferase (191 aa).

It belongs to the L/F-transferase family.

It is found in the cytoplasm. The catalysed reaction is N-terminal L-lysyl-[protein] + L-leucyl-tRNA(Leu) = N-terminal L-leucyl-L-lysyl-[protein] + tRNA(Leu) + H(+). The enzyme catalyses N-terminal L-arginyl-[protein] + L-leucyl-tRNA(Leu) = N-terminal L-leucyl-L-arginyl-[protein] + tRNA(Leu) + H(+). It catalyses the reaction L-phenylalanyl-tRNA(Phe) + an N-terminal L-alpha-aminoacyl-[protein] = an N-terminal L-phenylalanyl-L-alpha-aminoacyl-[protein] + tRNA(Phe). Functions in the N-end rule pathway of protein degradation where it conjugates Leu, Phe and, less efficiently, Met from aminoacyl-tRNAs to the N-termini of proteins containing an N-terminal arginine or lysine. This is Leucyl/phenylalanyl-tRNA--protein transferase from Nostoc punctiforme (strain ATCC 29133 / PCC 73102).